The primary structure comprises 334 residues: Putative heat shock protein HSP 90-alpha A5 (334 aa).

Positions Lys55–Glu107 are disordered. The span at Gln59–Glu69 shows a compositional bias: basic and acidic residues. A compositionally biased stretch (acidic residues) spans Glu85 to Glu94. Ser89 bears the Phosphoserine mark. Residues Leu234–Lys267 are a coiled coil. Positions Glu314–Gly334 are disordered. Residues Gly320–Gly334 are compositionally biased toward basic and acidic residues. Residues Met327–Gly331 carry the TPR repeat-binding motif.

The protein belongs to the heat shock protein 90 family. Homodimer.

The protein localises to the cytoplasm. Its function is as follows. Putative molecular chaperone that may promote the maturation, structural maintenance and proper regulation of specific target proteins. This chain is Putative heat shock protein HSP 90-alpha A5 (HSP90AA5P), found in Homo sapiens (Human).